A 607-amino-acid polypeptide reads, in one-letter code: CRISPR-associated DNA-binding protein Cas12m (607 aa).

The tract at residues Met1–Gln16 is wedge domain (WED-N). The recognition domain (REC) stretch occupies residues Met17–Thr189. Positions Trp50–Glu124 are roof in REC. Positions Ala74–Arg83 are enriched in basic and acidic residues. The disordered stretch occupies residues Ala74–Val94. Residues Gly190 to Glu315 form a wedge domain (WED-C) region. The tract at residues Gly316–Val559 is ruvC-I. The tract at residues Ser391–Glu452 is ruvC insertion. Residues Ser552–Asp588 form a target nucleic-acid binding (TNB) region. Zn(2+) is bound by residues His560, Cys563, Cys580, and Cys583. Positions Thr589–Asn607 are ruvC-II. Asp590 is a Mg(2+) binding site.

This sequence belongs to the CRISPR-associated DNA-binding protein Cas12m family. As to quaternary structure, binds crRNA and target dsDNA as a monomer. It depends on Mg(2+) as a cofactor. Zn(2+) is required as a cofactor.

Functionally, CRISPR (clustered regularly interspaced short palindromic repeat), is an adaptive immune system that provides protection against mobile genetic elements (viruses, transposable elements and conjugative plasmids). CRISPR clusters contain sequences complementary to antecedent mobile elements and target invading nucleic acids. CRISPR clusters are transcribed and processed into CRISPR RNA (crRNA). Recognizes a short motif in the CRISPR repeat sequences (the 5' PAM or protospacer adjacent motif, 5'-TTN-3' in this organism) to help distinguish self versus nonself, as targets within the bacterial CRISPR locus do not have PAMs. Upon expression in E.coli as a CRISPR locus inhibits plasmid propagation when targeted to regions essential for plasmid propagation (replication origin and a selectable marker); inhibits expression of a non-selectable marker, probably at the transcriptional level. Protects E.coli against bacteriophage M13mp18, to a lesser extent against lambda and VpaE1 as well as phage T4 with hydroxymethyl or unmodified (but not glycosylated) cytosines. Preferentially binds to its associated crRNA. Cas12m-crRNA binds DNA in a PAM-dependent, crRNA-guided fashion. Binds a 20-bp crRNA-ss-target DNA heteroduplex, in a 52 nucleotide crRNA. No dsDNA, ssDNA or RNA nuclease activity is seen for the crRNA-Cas12m complex. Probably required for pre-crRNA processing to mature crRNA. The sequence is that of CRISPR-associated DNA-binding protein Cas12m from Gordonia otitidis (strain DSM 44809 / CCUG 52243 / JCM 12355 / NBRC 100426 / IFM 10032).